We begin with the raw amino-acid sequence, 163 residues long: Large ribosomal subunit protein eL24y (163 aa).

Over residues isoleucine 119–phenylalanine 133 the composition is skewed to basic and acidic residues. Residues isoleucine 119–arginine 163 form a disordered region.

It belongs to the eukaryotic ribosomal protein eL24 family. As to quaternary structure, interacts with REIL1 and REIL2. Component of the large ribosomal subunit. In terms of tissue distribution, ubiquitous.

It localises to the cytoplasm. The protein resides in the nucleus. The protein localises to the nucleolus. Its subcellular location is the nucleoplasm. Functionally, might have an extraribosomal function in reinitiation of translation of ETTIN and MONOPTEROS genes that are involved in the auxin-mediated gynoecium patterning. Essential in leaf polarity establishment, probably having a role for translation in leaf dorsoventral patterning to specify leaf adaxial identity. In Arabidopsis thaliana (Mouse-ear cress), this protein is Large ribosomal subunit protein eL24y.